Reading from the N-terminus, the 207-residue chain is UPF0328 protein ECU02_1590/ECU04_0060/ECU08_2120 (207 aa).

Disordered stretches follow at residues 1-154 and 180-207; these read MPRP…HSHT and GRLHGSPTKGAQTAQQAQPHPPKQLATL. 2 stretches are compositionally biased toward basic and acidic residues: residues 14-24 and 75-97; these read DHPDFRSESSA and HTEGCHTHEANPEPNTKHTETES. 2 stretches are compositionally biased toward polar residues: residues 98 to 121 and 133 to 149; these read PKPQTSTQHHTPITIPSSLLSQNT and SRPSTIPANTYQPQSPH.

This sequence belongs to the UPF0328 family.

In Encephalitozoon cuniculi (strain GB-M1) (Microsporidian parasite), this protein is UPF0328 protein ECU02_1590/ECU04_0060/ECU08_2120.